The following is a 399-amino-acid chain: MGIIERIKEIEAEMARTQKNKATEYHLGQLKAKIAKLRTQLLEPPKGASGGGEGFEVTKYGHGRVALIGFPSVGKSTLLTMLTGTHSEAASYEFTTLTCIPGVIHYNDTKIQLLDLPGIIEGASEGKGRGRQVIAVAKSSDLVLMVLDASKSEGHRQILTKELEAVGLRLNKTPPQIYFKKKKTGGISFNTTAPLTHIDEKLCYQILHEYKIHNAEVLFRENATVDDFIDVIEGNRKYIKCVYVYNKIDVVGIDDVDRLSRQPNSIVISCNLKLNLDRLLARMWDEMGLVRVYSKPQGQQPDFDEPFVLSSDRGGCTVEDFCNHVHRTLVKDMKYALVWGTSTRHNPQNCGLSQHLEDEDVVQIVKKKERDEGGRGRFKSHSNAPARIADREKKAPLKQ.

Residues 63–288 (GRVALIGFPS…LLARMWDEMG (226 aa)) form the OBG-type G domain. Residues 69-76 (GFPSVGKS), 115-119 (DLPGI), and 246-249 (NKID) each bind GTP. Residues 288 to 366 (GLVRVYSKPQ…EDEDVVQIVK (79 aa)) form the TGS domain. Residues 367 to 399 (KKERDEGGRGRFKSHSNAPARIADREKKAPLKQ) form a disordered region. Residues 388 to 399 (IADREKKAPLKQ) show a composition bias toward basic and acidic residues.

Belongs to the TRAFAC class OBG-HflX-like GTPase superfamily. OBG GTPase family. Expressed in actively growing tissues and reproductive organs. Mostly expressed in leaves, stems and siliques. Also present in flowers and flower buds, and, to a lower extent, in roots.

It is found in the cytoplasmic vesicle. The protein resides in the cytoplasm. Functionally, binds GDP and GTP, and has low GTPase activity. May interact with phosphatidic acid (PA). This chain is Developmentally-regulated G-protein 1 (DRG1), found in Arabidopsis thaliana (Mouse-ear cress).